The primary structure comprises 962 residues: Leucine--tRNA ligase (962 aa).

The 'HIGH' region motif lies at Pro-68–His-79. Residues Asp-559–Glu-582 form a disordered region. Over residues Ala-570–Ser-579 the composition is skewed to polar residues. A 'KMSKS' region motif is present at residues Lys-733–Ser-737. Residue Lys-736 participates in ATP binding.

Belongs to the class-I aminoacyl-tRNA synthetase family.

It localises to the cytoplasm. The enzyme catalyses tRNA(Leu) + L-leucine + ATP = L-leucyl-tRNA(Leu) + AMP + diphosphate. This chain is Leucine--tRNA ligase, found in Streptomyces avermitilis (strain ATCC 31267 / DSM 46492 / JCM 5070 / NBRC 14893 / NCIMB 12804 / NRRL 8165 / MA-4680).